A 1212-amino-acid chain; its full sequence is MVLLLILSVLLLKEDVRGSAQSSERRVVAHMPGDIIIGALFSVHHQPTVDKVHERKCGAVREQYGIQRVEAMLHTLERINSDPTLLPNITLGCEIRDSCWHSAVALEQSIEFIRDSLISSEEEEGLVRCVDGSSSSFRSKKPIVGVIGPGSSSVAIQVQNLLQLFNIPQIAYSATSMDLSDKTLFKYFMRVVPSDAQQARAMVDIVKRYNWTYVSAVHTEGNYGESGMEAFKDMSAKEGICIAHSYKIYSNAGEQSFDKLLKKLTSHLPKARVVACFCEGMTVRGLLMAMRRLGLAGEFLLLGSDGWADRYDVTDGYQREAVGGITIKLQSPDVKWFDDYYLKLRPETNHRNPWFQEFWQHRFQCRLEGFPQENSKYNKTCNSSLTLKTHHVQDSKMGFVINAIYSMAYGLHNMQMSLCPGYAGLCDAMKPIDGRKLLESLMKTNFTGVSGDTILFDENGDSPGRYEIMNFKEMGKDYFDYINVGSWDNGELKMDDDEVWSKKSNIIRSVCSEPCEKGQIKVIRKGEVSCCWTCTPCKENEYVFDEYTCKACQLGSWPTDDLTGCDLIPVQYLRWGDPEPIAAVVFACLGLLATLFVTVVFIIYRDTPVVKSSSRELCYIILAGICLGYLCTFCLIAKPKQIYCYLQRIGIGLSPAMSYSALVTKTNRIARILAGSKKKICTKKPRFMSACAQLVIAFILICIQLGIIVALFIMEPPDIMHDYPSIREVYLICNTTNLGVVTPLGYNGLLILSCTFYAFKTRNVPANFNEAKYIAFTMYTTCIIWLAFVPIYFGSNYKIITMCFSVSLSATVALGCMFVPKVYIILAKPERNVRSAFTTSTVVRMHVGDGKSSSAASRSSSLVNLWKRRGSSGETLRYKDRRLAQHKSEIECFTPKGSMGNGGRATMSSSNGKSVTWAQNEKSSRGQHLWQRLSIHINKKENPNQTAVIKPFPKSTESRGLGAGAGAGGSAGGVGATGGAGCAGAGPGGPESPDAGPKALYDVAEAEEHFPAPARPRSPSPISTLSHRAGSASRTDDDVPSLHSEPVARSSSSQGSLMEQISSVVTRFTANISELNSMMLSTAAPSPGVGAPLCSSYLIPKEIQLPTTMTTFAEIQPLPAIEVTGGAQPAAGAQAAGDAARESPAAGPEAAAAKPDLEELVALTPPSPFRDSVDSGSTTPNSPVSESALCIPSSPKYDTLIIRDYTQSSSSL.

An N-terminal signal peptide occupies residues 1-20 (MVLLLILSVLLLKEDVRGSA). The Extracellular segment spans residues 22-580 (SSERRVVAHM…QYLRWGDPEP (559 aa)). Cysteines 57 and 99 form a disulfide. Tyr64 is a binding site for L-glutamate. A glycan (N-linked (GlcNAc...) asparagine) is linked at Asn88. L-glutamate contacts are provided by residues Ser152 and 173 to 175 (SAT). The N-linked (GlcNAc...) asparagine glycan is linked to Asn210. Tyr223 contacts L-glutamate. 8 disulfide bridges follow: Cys241/Cys530, Cys276/Cys278, Cys365/Cys381, Cys419/Cys426, Cys511/Cys531, Cys515/Cys534, Cys537/Cys549, and Cys552/Cys565. Asp305 is an L-glutamate binding site. 2 N-linked (GlcNAc...) asparagine glycosylation sites follow: Asn378 and Asn382. An L-glutamate-binding site is contributed by Lys396. Asn445 is a glycosylation site (N-linked (GlcNAc...) asparagine). A helical membrane pass occupies residues 581–603 (IAAVVFACLGLLATLFVTVVFII). Residues 604–613 (YRDTPVVKSS) are Cytoplasmic-facing. A helical transmembrane segment spans residues 614-636 (SRELCYIILAGICLGYLCTFCLI). Over 637–644 (AKPKQIYC) the chain is Extracellular. Cys644 and Cys733 form a disulfide bridge. A helical transmembrane segment spans residues 645 to 667 (YLQRIGIGLSPAMSYSALVTKTN). Topologically, residues 668 to 693 (RIARILAGSKKKICTKKPRFMSACAQ) are cytoplasmic. Residues 694-714 (LVIAFILICIQLGIIVALFIM) form a helical membrane-spanning segment. The Extracellular segment spans residues 715 to 737 (EPPDIMHDYPSIREVYLICNTTN). Asn734 is a glycosylation site (N-linked (GlcNAc...) asparagine). The helical transmembrane segment at 738–759 (LGVVTPLGYNGLLILSCTFYAF) threads the bilayer. Topologically, residues 760–772 (KTRNVPANFNEAK) are cytoplasmic. A helical membrane pass occupies residues 773-795 (YIAFTMYTTCIIWLAFVPIYFGS). Topologically, residues 796-798 (NYK) are extracellular. Residues 799 to 820 (IITMCFSVSLSATVALGCMFVP) traverse the membrane as a helical segment. Residues 821-1212 (KVYIILAKPE…RDYTQSSSSL (392 aa)) are Cytoplasmic-facing. Position 861 is a phosphoserine (Ser861). An omega-N-methylarginine mark is found at Arg869 and Arg925. Disordered stretches follow at residues 937–971 (INKK…GGSA), 1010–1056 (FPAP…SQGS), and 1132–1191 (GAQA…ALCI). Gly residues predominate over residues 961 to 971 (LGAGAGAGGSA). Ser1018 and Ser1020 each carry phosphoserine. Low complexity predominate over residues 1132 to 1153 (GAQAAGDAARESPAAGPEAAAA). Residues 1174–1185 (DSGSTTPNSPVS) show a composition bias toward polar residues.

The protein belongs to the G-protein coupled receptor 3 family. In terms of assembly, the PPXXF motif binds HOMER1, HOMER2 and HOMER3. Interacts with SIAH1, RYR1, RYR2, ITPR1, SHANK1, SHANK3 and TAMALIN. Interacts with NCDN. Isoform 2 interacts with NECAB2. Interacts with CAMK2A.

Its subcellular location is the cell membrane. In terms of biological role, G-protein coupled receptor for glutamate. Ligand binding causes a conformation change that triggers signaling via guanine nucleotide-binding proteins (G proteins) and modulates the activity of down-stream effectors. Signaling activates a phosphatidylinositol-calcium second messenger system and generates a calcium-activated chloride current. Plays an important role in the regulation of synaptic plasticity and the modulation of the neural network activity. The polypeptide is Metabotropic glutamate receptor 5 (GRM5) (Homo sapiens (Human)).